The sequence spans 124 residues: Fluoride-specific ion channel FluC (124 aa).

The next 4 helical transmembrane spans lie at 5-25 (VYIA…SGFV), 32-52 (SFPY…GLIM), 67-87 (FAIT…SFET), and 96-116 (LLIA…CTWI). The Na(+) site is built by Gly75 and Thr78.

The protein belongs to the fluoride channel Fluc/FEX (TC 1.A.43) family.

It is found in the cell inner membrane. It carries out the reaction fluoride(in) = fluoride(out). Its activity is regulated as follows. Na(+) is not transported, but it plays an essential structural role and its presence is essential for fluoride channel function. In terms of biological role, fluoride-specific ion channel. Important for reducing fluoride concentration in the cell, thus reducing its toxicity. This chain is Fluoride-specific ion channel FluC, found in Citrifermentans bemidjiense (strain ATCC BAA-1014 / DSM 16622 / JCM 12645 / Bem) (Geobacter bemidjiensis).